A 475-amino-acid polypeptide reads, in one-letter code: Beta-amyrin 16-alpha-hydroxylase CYP87D16 (475 aa).

The helical transmembrane segment at 3-23 threads the bilayer; that stretch reads VVGLIGVAVVTILITQYVYKW. Residue Cys-423 participates in heme binding.

This sequence belongs to the cytochrome P450 family. It depends on heme as a cofactor.

It localises to the membrane. It catalyses the reaction beta-amyrin + reduced [NADPH--hemoprotein reductase] + O2 = 16alpha-hydroxy-beta-amyrin + oxidized [NADPH--hemoprotein reductase] + H2O + H(+). Its function is as follows. Involved in the biosynthetic pathway of maesasaponins, which are oleanane-type saponins with diverse biological activities. Catalyzes the C-16alpha oxidation of beta-amyrin to form 16alpha-hydroxy-beta-amyrin. In Maesa lanceolata (False assegai), this protein is Beta-amyrin 16-alpha-hydroxylase CYP87D16.